A 572-amino-acid chain; its full sequence is Arginine--tRNA ligase (572 aa).

The 'HIGH' region motif lies at proline 122–histidine 132.

It belongs to the class-I aminoacyl-tRNA synthetase family. In terms of assembly, monomer.

The protein localises to the cytoplasm. The enzyme catalyses tRNA(Arg) + L-arginine + ATP = L-arginyl-tRNA(Arg) + AMP + diphosphate. The sequence is that of Arginine--tRNA ligase from Neisseria gonorrhoeae (strain ATCC 700825 / FA 1090).